The following is a 148-amino-acid chain: MAKMHSSGKGRSGSVKPYATAFPTWLTKSVDEIKSDVIQMGNKGVPAPDIGTRLRDEYGIGKASDVLGESITRFLQRNGVVPKIPHDLESLVHRANTLRSHLNIYRKDNSAKYRLILVSSRMYRVARYYKRKMRIPGNWKPKLVELNK.

It belongs to the universal ribosomal protein uS15 family.

In Encephalitozoon cuniculi (strain GB-M1) (Microsporidian parasite), this protein is Small ribosomal subunit protein uS15 (RPS13).